Here is a 227-residue protein sequence, read N- to C-terminus: 2,3-bisphosphoglycerate-dependent phosphoglycerate mutase (227 aa).

Substrate is bound by residues 7-14 (RHGFSEWN), 20-21 (TG), arginine 59, 86-89 (ERHY), lysine 97, 113-114 (RR), and 182-183 (GN). The active-site Tele-phosphohistidine intermediate is the histidine 8. Glutamate 86 (proton donor/acceptor) is an active-site residue.

Belongs to the phosphoglycerate mutase family. BPG-dependent PGAM subfamily. Homodimer.

It carries out the reaction (2R)-2-phosphoglycerate = (2R)-3-phosphoglycerate. It participates in carbohydrate degradation; glycolysis; pyruvate from D-glyceraldehyde 3-phosphate: step 3/5. Its function is as follows. Catalyzes the interconversion of 2-phosphoglycerate and 3-phosphoglycerate. The polypeptide is 2,3-bisphosphoglycerate-dependent phosphoglycerate mutase (Pasteurella multocida (strain Pm70)).